We begin with the raw amino-acid sequence, 583 residues long: Aspartate--tRNA ligase (583 aa).

L-aspartate is bound at residue Glu174. Residues 198 to 201 (QITK) form an aspartate region. Arg220 is a binding site for L-aspartate. ATP-binding positions include 220–222 (RDE) and Gln229. His443 contacts L-aspartate. Glu477 is a binding site for ATP. Residue Arg484 coordinates L-aspartate. 529 to 532 (GLDR) is a binding site for ATP.

It belongs to the class-II aminoacyl-tRNA synthetase family. Type 1 subfamily. As to quaternary structure, homodimer.

The protein resides in the cytoplasm. It carries out the reaction tRNA(Asp) + L-aspartate + ATP = L-aspartyl-tRNA(Asp) + AMP + diphosphate. Its function is as follows. Catalyzes the attachment of L-aspartate to tRNA(Asp) in a two-step reaction: L-aspartate is first activated by ATP to form Asp-AMP and then transferred to the acceptor end of tRNA(Asp). The protein is Aspartate--tRNA ligase of Streptococcus suis (strain 98HAH33).